Here is a 389-residue protein sequence, read N- to C-terminus: MIVEPKFRGFICTTSHPTGCKKNVENQIEYVKENGKIEGAKRVLVLGASTGYGLASAIVASEACDAEVLGVSFEREAKGKRTASAGWYNIESLKKFSEGEGKKFISVNGDAFSNEVKSEVIDLIKENMGKVDLVIYSLAAPKRKDPVSGEVYSSCLKTVGAPFTSKTLDFHTGEIQDITINPATEEEIEGTRKVMGGEDWMLWIEALKEADVLEKGVKTIAYSYIGPEVTYPIYREGTIGRAKNDLEKTAGEINKVLKSLDGEGYISVNKALVTQASSAIPIVSLYISILYKVMKEKGTHEGCIEQIYRMFKELYEGKLNLDSENRIRIDDLEMAEDVQKAIEEIWPQITSENVFELSDAEDFKKEFFKLFGFGLEGVDYSEDVDITTV.

NAD(+) contacts are provided by residues 47-52 (GASTGY), 73-74 (FE), 110-111 (DA), and 138-139 (LA). Tyr-224 provides a ligand contact to substrate. Tyr-234 functions as the Proton donor in the catalytic mechanism. NAD(+) is bound by residues Lys-243 and 272 to 274 (LVT).

It belongs to the TER reductase family. As to quaternary structure, monomer.

The catalysed reaction is a 2,3-saturated acyl-CoA + NAD(+) = a (2E)-enoyl-CoA + NADH + H(+). The protein operates within lipid metabolism; fatty acid biosynthesis. Involved in the fatty acid synthesis (FAS II). Catalyzes the reduction of a carbon-carbon double bond in an enoyl moiety that is covalently linked to a coenzyme A (CoA). This Clostridium perfringens (strain ATCC 13124 / DSM 756 / JCM 1290 / NCIMB 6125 / NCTC 8237 / Type A) protein is Trans-2-enoyl-CoA reductase [NADH].